Here is a 206-residue protein sequence, read N- to C-terminus: Small ribosomal subunit protein uS4 (206 aa).

One can recognise an S4 RNA-binding domain in the interval 98 to 155; sequence TRLDNVVYRLGWALSRDQARQLVSHGKIAVNGKRVNIPSYNLKPGDVVELLDKDLIPV.

It belongs to the universal ribosomal protein uS4 family. As to quaternary structure, part of the 30S ribosomal subunit. Contacts protein S5. The interaction surface between S4 and S5 is involved in control of translational fidelity.

Its function is as follows. One of the primary rRNA binding proteins, it binds directly to 16S rRNA where it nucleates assembly of the body of the 30S subunit. In terms of biological role, with S5 and S12 plays an important role in translational accuracy. This is Small ribosomal subunit protein uS4 from Dictyoglomus thermophilum (strain ATCC 35947 / DSM 3960 / H-6-12).